The chain runs to 403 residues: Eukaryotic translation initiation factor 3 subunit H (403 aa).

Residues 57–206 enclose the MPN domain; it reads VRLDGLALTK…VKAYRLSPSF (150 aa). Positions 99–122 are disordered; that stretch reads ALPNPGRSNSERDEEEDRSSRNAT.

This sequence belongs to the eIF-3 subunit H family. As to quaternary structure, component of the eukaryotic translation initiation factor 3 (eIF-3) complex.

It is found in the cytoplasm. Its function is as follows. Component of the eukaryotic translation initiation factor 3 (eIF-3) complex, which is involved in protein synthesis of a specialized repertoire of mRNAs and, together with other initiation factors, stimulates binding of mRNA and methionyl-tRNAi to the 40S ribosome. The eIF-3 complex specifically targets and initiates translation of a subset of mRNAs involved in cell proliferation. The chain is Eukaryotic translation initiation factor 3 subunit H from Mycosarcoma maydis (Corn smut fungus).